The following is a 298-amino-acid chain: Calcium-binding protein 1 (298 aa).

The segment covering 1–10 has biased composition (basic and acidic residues); the sequence is MSSHIAKSES. The disordered stretch occupies residues 1-131; the sequence is MSSHIAKSES…APAGTPEADP (131 aa). Ser-2 is lipidated: N-myristoyl glycine. His-4 is lipidated: S-palmitoyl cysteine. Over residues 11–25 the composition is skewed to low complexity; that stretch reads KTSLLKAAAASGGSR. 4 consecutive EF-hand domains span residues 153–188, 207–224, 230–265, and 267–298; these read EEIE…MGYM, GHVD…KLLA, IGVK…LLGH, and VGHR…MMSR. Positions 166, 168, 170, 172, and 177 each coordinate Ca(2+). Positions 243, 245, 247, and 249 each coordinate Ca(2+). Position 251 is a phosphoserine (Ser-251). Glu-254, Asp-280, Asn-282, Asp-284, Arg-286, and Glu-291 together coordinate Ca(2+).

Interacts with ITPR1, ITPR2 and ITPR3. The strength of this interaction inversely correlates with calcium concentration. Interacts with CACNA1A (via C-terminal CDB motif) in the pre- and postsynaptic membranes. Interacts with CACNA1C. Interacts with CACNA1D. Interacts (via EF-hands 1 and 2) at microtubules with MAP1LC3B. Interacts (via EF-hands 1 and 2) with NSMF (via the central NLS-containing motif region), the interaction occurs in a calcium dependent manner after synaptic NMDA receptor stimulation and prevents nuclear import of NSMF. Interacts with MYO1C and TRPC5. Interacts with SPACA9. Post-translationally, phosphorylated. The phosphorylation regulates the activity. In terms of tissue distribution, somatodendritic compartment of neurons. Restricted expression in retina to a subpopulation of amacrine, bipolar, and ganglion cells. According to PubMed:11906216, expression is heterogeneous within brain regions and their major cell types and does not match with those of marker proteins for characterized neuronal subpopulations. Isoform 2: Minor isoform expressed in the brain, in the granule cell layer of the cerebellum, at low level. Not developmentally regulated. Isoform 3: Minor isoform expressed in the brain, in the granule cell layer. of the cerebellum, at low level. Not developmentally regulated.

Its subcellular location is the cytoplasm. It is found in the cytoskeleton. In terms of biological role, modulates calcium-dependent activity of inositol 1,4,5-triphosphate receptors (ITPRs). Inhibits agonist-induced intracellular calcium signaling. Enhances inactivation and does not support calcium-dependent facilitation of voltage-dependent P/Q-type calcium channels. Causes calcium-dependent facilitation and inhibits inactivation of L-type calcium channels by binding to the same sites as calmodulin in the C-terminal domain of CACNA1C, but has an opposite effect on channel function. Suppresses the calcium-dependent inactivation of CACNA1D. Inhibits TRPC5 channels. Prevents NMDA receptor-induced cellular degeneration. Required for the normal transfer of light signals through the retina. The sequence is that of Calcium-binding protein 1 (Cabp1) from Rattus norvegicus (Rat).